Reading from the N-terminus, the 193-residue chain is Riboflavin kinase (193 aa).

The tract at residues 1-59 is H-T-H motif-like; the sequence is MGISQQAASQHLRELEDEGLITRNAEGKGISVMVTDKGRHELLRVYNILHDSLHSRPDH. The segment at 60–193 is riboflavin kinase; the sequence is VEITGTLVSG…TIRIPLEQED (134 aa). Position 69–74 (69–74) interacts with CDP; the sequence is GMNEGA. Thr-98 and Asn-100 together coordinate Mg(2+). Positions 156 and 164 each coordinate FMN. 169-172 contributes to the CDP binding site; it reads LDIR.

Belongs to the archaeal riboflavin kinase family. Requires Mg(2+) as cofactor.

It catalyses the reaction riboflavin + CTP = CDP + FMN + H(+). It participates in cofactor biosynthesis; FMN biosynthesis; FMN from riboflavin (CTP route): step 1/1. Functionally, catalyzes the CTP-dependent phosphorylation of riboflavin (vitamin B2) to form flavin mononucleotide (FMN). This Cenarchaeum symbiosum (strain A) protein is Riboflavin kinase (ribK).